We begin with the raw amino-acid sequence, 209 residues long: MTQVFGENGELIPVTVVEAKENVVLQKKTVEVDGYNAIQVGFEDKKAYKKDAKSNKYANKPAEGHAKKADAAPKRFIREFRNVDVDAYEVGQEVSVDTFVAGDVIDVTGVSKGKGFQGAIKRHGQSRGPMSHGSHFHRAPGSVGMASDASRVFKGQKMPGRMGGNTVTVQNLEVVQVDTENKVILVKGNVPGPKKGLVEIRTSIKKGNK.

The disordered stretch occupies residues 119–145; it reads AIKRHGQSRGPMSHGSHFHRAPGSVGM.

The protein belongs to the universal ribosomal protein uL3 family. In terms of assembly, part of the 50S ribosomal subunit. Forms a cluster with proteins L14 and L19.

In terms of biological role, one of the primary rRNA binding proteins, it binds directly near the 3'-end of the 23S rRNA, where it nucleates assembly of the 50S subunit. This chain is Large ribosomal subunit protein uL3, found in Staphylococcus aureus (strain COL).